The following is a 92-amino-acid chain: MTRSLKKNPFVANHLLRKINKLNTKAEKNLIVTWSRASTIIPTMIGHTIAIHNGKEHLPIYITDRMVGHKLGEFAPTLNFRGHAKNDNKSRR.

This sequence belongs to the universal ribosomal protein uS19 family.

The protein localises to the plastid. The protein resides in the chloroplast. Protein S19 forms a complex with S13 that binds strongly to the 16S ribosomal RNA. The protein is Small ribosomal subunit protein uS19c of Populus alba (White poplar).